The following is a 145-amino-acid chain: Deoxyuridine 5'-triphosphate nucleotidohydrolase (145 aa).

Residues 65 to 67 (RSG), N78, and 82 to 84 (TID) each bind substrate.

It belongs to the dUTPase family. Mg(2+) serves as cofactor.

It catalyses the reaction dUTP + H2O = dUMP + diphosphate + H(+). Its pathway is pyrimidine metabolism; dUMP biosynthesis; dUMP from dCTP (dUTP route): step 2/2. This enzyme is involved in nucleotide metabolism: it produces dUMP, the immediate precursor of thymidine nucleotides and it decreases the intracellular concentration of dUTP so that uracil cannot be incorporated into DNA. This is Deoxyuridine 5'-triphosphate nucleotidohydrolase from Clostridium tetani (strain Massachusetts / E88).